The chain runs to 66 residues: UPF0391 membrane protein AM1_5042 (66 aa).

The next 2 helical transmembrane spans lie at 4–24 (LTLT…SGIA) and 28–47 (AAIA…LVWP).

It belongs to the UPF0391 family.

Its subcellular location is the cell membrane. The sequence is that of UPF0391 membrane protein AM1_5042 from Acaryochloris marina (strain MBIC 11017).